The chain runs to 129 residues: MARKTNTRKRRVKKNIESGIAHIRSTFNNTIVTITDVHGNAISWSSAGALGFKGSRKSTPFAAQMAAEAAAKASMEHGMKTVEVNVKGPGAGREAAIRALQAAGLEITAIKDVTPVPHNGCRPPKRRRV.

The protein belongs to the universal ribosomal protein uS11 family. Part of the 30S ribosomal subunit. Interacts with proteins S7 and S18. Binds to IF-3.

Its function is as follows. Located on the platform of the 30S subunit, it bridges several disparate RNA helices of the 16S rRNA. Forms part of the Shine-Dalgarno cleft in the 70S ribosome. The polypeptide is Small ribosomal subunit protein uS11 (Anoxybacillus flavithermus (strain DSM 21510 / WK1)).